We begin with the raw amino-acid sequence, 455 residues long: EP1-like glycoprotein 1 (455 aa).

A signal peptide spans 1-22; the sequence is MLRFDYLLITALAISTVSVVMA. Positions 43–163 constitute a Bulb-type lectin domain; sequence TEYDASYRFL…HGKFVWQSFD (121 aa). N106, N191, N211, N241, and N289 each carry an N-linked (GlcNAc...) asparagine glycan. The residue at position 374 (C374) is an S-nitrosocysteine. The 82-residue stretch at 374-455 folds into the PAN domain; it reads CSGGKGKAVN…NTSSVAYIKY (82 aa). 2 disulfide bridges follow: C410–C432 and C414–C420. N-linked (GlcNAc...) asparagine glycosylation occurs at N446.

It localises to the secreted. Its subcellular location is the cell wall. This chain is EP1-like glycoprotein 1, found in Arabidopsis thaliana (Mouse-ear cress).